The primary structure comprises 110 residues: Iron-sulfur cluster assembly protein CyaY (110 aa).

It belongs to the frataxin family.

Involved in iron-sulfur (Fe-S) cluster assembly. May act as a regulator of Fe-S biogenesis. This Variovorax paradoxus (strain S110) protein is Iron-sulfur cluster assembly protein CyaY.